Here is an 88-residue protein sequence, read N- to C-terminus: Large ribosomal subunit protein bL31B (88 aa).

This sequence belongs to the bacterial ribosomal protein bL31 family. Type B subfamily. In terms of assembly, part of the 50S ribosomal subunit.

In Leuconostoc citreum (strain KM20), this protein is Large ribosomal subunit protein bL31B.